The chain runs to 978 residues: Exocyst complex component 5 (978 aa).

The span at 1 to 11 shows a compositional bias: polar residues; it reads MSWARNIQSRI. Disordered regions lie at residues 1–87 and 122–246; these read MSWA…TTTQ and TSPS…TTPY. 2 stretches are compositionally biased toward low complexity: residues 36-52 and 62-86; these read PSSP…TSLT and SQPT…TTTT. Residues 122-142 are compositionally biased toward polar residues; it reads TSPSMASPIGTSTGIQNPNAK. Over residues 143–245 the composition is skewed to low complexity; that stretch reads PSSLPSPSQS…QPTPIKQTTP (103 aa). Residues 303–325 adopt a coiled-coil conformation; the sequence is NTQLQLSQLESNIDRRLDDLAEE.

This sequence belongs to the SEC10 family. As to quaternary structure, the exocyst complex is composed of sec3/exoc1, sec5/exoc2, sec6/exoc3, sec8/exoc4, sec10/exoc5, sec15/exoc6, exo70/exoc7 and exo84/exoc8.

Functionally, component of the exocyst complex involved in the docking of exocytic vesicles with fusion sites on the plasma membrane. This Dictyostelium discoideum (Social amoeba) protein is Exocyst complex component 5 (exoc5).